Here is a 225-residue protein sequence, read N- to C-terminus: Peptidyl-tRNA hydrolase (225 aa).

Residue tyrosine 14 coordinates tRNA. The active-site Proton acceptor is histidine 19. Positions 64, 66, and 112 each coordinate tRNA. The interval 184 to 225 (ALRMQPPKPEKPKPAAKAPEAQAPEAAPDERSALQKLADRFR) is disordered. Positions 198–209 (AAKAPEAQAPEA) are enriched in low complexity. The span at 211–225 (PDERSALQKLADRFR) shows a compositional bias: basic and acidic residues.

This sequence belongs to the PTH family. As to quaternary structure, monomer.

Its subcellular location is the cytoplasm. It carries out the reaction an N-acyl-L-alpha-aminoacyl-tRNA + H2O = an N-acyl-L-amino acid + a tRNA + H(+). Functionally, hydrolyzes ribosome-free peptidyl-tRNAs (with 1 or more amino acids incorporated), which drop off the ribosome during protein synthesis, or as a result of ribosome stalling. Its function is as follows. Catalyzes the release of premature peptidyl moieties from peptidyl-tRNA molecules trapped in stalled 50S ribosomal subunits, and thus maintains levels of free tRNAs and 50S ribosomes. The polypeptide is Peptidyl-tRNA hydrolase (Cereibacter sphaeroides (strain ATCC 17023 / DSM 158 / JCM 6121 / CCUG 31486 / LMG 2827 / NBRC 12203 / NCIMB 8253 / ATH 2.4.1.) (Rhodobacter sphaeroides)).